Consider the following 485-residue polypeptide: ATP synthase subunit beta (485 aa).

158 to 165 serves as a coordination point for ATP; sequence GGAGVGKT.

This sequence belongs to the ATPase alpha/beta chains family. As to quaternary structure, F-type ATPases have 2 components, CF(1) - the catalytic core - and CF(0) - the membrane proton channel. CF(1) has five subunits: alpha(3), beta(3), gamma(1), delta(1), epsilon(1). CF(0) has four main subunits: a(1), b(1), b'(1) and c(9-12).

It localises to the cell inner membrane. It carries out the reaction ATP + H2O + 4 H(+)(in) = ADP + phosphate + 5 H(+)(out). In terms of biological role, produces ATP from ADP in the presence of a proton gradient across the membrane. The catalytic sites are hosted primarily by the beta subunits. In Erythrobacter litoralis (strain HTCC2594), this protein is ATP synthase subunit beta.